The following is a 447-amino-acid chain: MTKQIITLVGRPNVGKSTLFNRLSIRKKAIVHDLPGVTRDRKYTDGKIGSFEFLLIDTPGLDEHPNSMGERLIEQTTKAILEADLICFMVDGRSGILPDDKLLSSFVRKYNKPAILVVNKCEKAFDFDKEYYKLGFDSMIAISAEHGTGLIDLYDEIIAKLPEEESIKTNIADPIKGDCLQIVVSGRPNAGKSTFINALINDERLLTGPEAGITRESIEIDWQYKNNHIKLIDTAGLRKKSTITKSLEKLSASDTINSIKFANTVILMIDALAPLKQQDLNIASHVVNEGRSIVIVVNKWDLVKESEKEAFQEEFYYQINTHLPQVKGIPVLFISAINKQNIEQVLDACLKIYKIWNKKITTSKLNEWLNFTTEAHLLPLQKGGRRVRVKYMTQTKTRPPTFKLFSNNPEKITDSYTRYLVNNMREAFDMPGVPIRFIYVKTKNPYV.

2 consecutive EngA-type G domains span residues 4–165 (QIIT…PEEE) and 180–357 (LQIV…KIWN). Residues 10–17 (GRPNVGKS), 57–61 (DTPGL), 119–122 (NKCE), 186–193 (GRPNAGKS), 233–237 (DTAGL), and 298–301 (NKWD) contribute to the GTP site. The region spanning 358–443 (KKITTSKLNE…PIRFIYVKTK (86 aa)) is the KH-like domain.

It belongs to the TRAFAC class TrmE-Era-EngA-EngB-Septin-like GTPase superfamily. EngA (Der) GTPase family. Associates with the 50S ribosomal subunit.

Functionally, GTPase that plays an essential role in the late steps of ribosome biogenesis. This is GTPase Der from Rickettsia africae (strain ESF-5).